A 388-amino-acid polypeptide reads, in one-letter code: Pepsin A-1 (388 aa).

A signal peptide spans 1–15; that stretch reads MKWLLLLGLVALSEC. 2 consecutive propeptides (activation peptide) follow at residues 16-40 and 41-62; these read IIYK…LLKD and FLKK…APTL. The Peptidase A1 domain maps to 76 to 385; the sequence is YFGTIGIGTP…DRANNQVGLA (310 aa). Asp-94 is an active-site residue. Cys-107 and Cys-112 form a disulfide bridge. A Phosphoserine modification is found at Ser-130. Cysteines 268 and 272 form a disulfide. The active site involves Asp-277. Residues Cys-311 and Cys-344 are joined by a disulfide bond.

It belongs to the peptidase A1 family. In terms of processing, each pepsinogen is converted to corresponding pepsin at pH 2.0 in part as a result of the release of a 47 AA activation segment and in part as a result of stepwise proteolytic cleavage via an intermediate form(s).

The protein localises to the secreted. The catalysed reaction is Preferential cleavage: hydrophobic, preferably aromatic, residues in P1 and P1' positions. Cleaves 1-Phe-|-Val-2, 4-Gln-|-His-5, 13-Glu-|-Ala-14, 14-Ala-|-Leu-15, 15-Leu-|-Tyr-16, 16-Tyr-|-Leu-17, 23-Gly-|-Phe-24, 24-Phe-|-Phe-25 and 25-Phe-|-Tyr-26 bonds in the B chain of insulin.. Its function is as follows. Shows particularly broad specificity; although bonds involving phenylalanine and leucine are preferred, many others are also cleaved to some extent. The sequence is that of Pepsin A-1 (PGA) from Macaca fuscata fuscata (Japanese macaque).